The primary structure comprises 766 residues: EMILIN-3 (766 aa).

The first 22 residues, 1 to 22 (MGRRRLLVWLCAVAALLSGAQA), serve as a signal peptide directing secretion. The region spanning 55-131 (HKALCAYVVH…PGFTGKRCPE (77 aa)) is the EMI domain. Cystine bridges form between C59/C121, C86/C92, and C120/C129. N66 carries N-linked (GlcNAc...) asparagine glycosylation. Residues 132 to 179 (HLTDHGAASPQLEPEPQIPSGQLDPGPRPPSYSRAAPSPHGRKGPGLF) form a disordered region. An N-linked (GlcNAc...) asparagine glycan is attached at N443. The stretch at 467 to 491 (GTMLEERVQSLEERLATLAGELSHD) forms a coiled coil. N562, N616, and N732 each carry an N-linked (GlcNAc...) asparagine glycan. Coiled coils occupy residues 615–663 (ANTS…QLKA) and 726–761 (SHVDQLNRTLAQHTQDIARLRDDLLDCQAQLAEQVR).

It localises to the secreted. Its subcellular location is the extracellular space. It is found in the extracellular matrix. This is EMILIN-3 (EMILIN3) from Homo sapiens (Human).